The following is a 156-amino-acid chain: Small ribosomal subunit protein uS7 (156 aa).

It belongs to the universal ribosomal protein uS7 family. Part of the 30S ribosomal subunit. Contacts proteins S9 and S11.

In terms of biological role, one of the primary rRNA binding proteins, it binds directly to 16S rRNA where it nucleates assembly of the head domain of the 30S subunit. Is located at the subunit interface close to the decoding center, probably blocks exit of the E-site tRNA. This chain is Small ribosomal subunit protein uS7, found in Lachnospira eligens (strain ATCC 27750 / DSM 3376 / VPI C15-48 / C15-B4) (Eubacterium eligens).